Consider the following 388-residue polypeptide: Succinate--CoA ligase [ADP-forming] subunit beta (388 aa).

Positions 9 to 244 (KDLLSSYDIA…PSQENVRDVL (236 aa)) constitute an ATP-grasp domain. ATP-binding positions include Lys46, 53-55 (GRG), Val102, and Glu107. Mg(2+)-binding residues include Asn199 and Asp213. Substrate is bound by residues Asn264 and 321-323 (GIM).

The protein belongs to the succinate/malate CoA ligase beta subunit family. In terms of assembly, heterotetramer of two alpha and two beta subunits. It depends on Mg(2+) as a cofactor.

The enzyme catalyses succinate + ATP + CoA = succinyl-CoA + ADP + phosphate. It carries out the reaction GTP + succinate + CoA = succinyl-CoA + GDP + phosphate. It participates in carbohydrate metabolism; tricarboxylic acid cycle; succinate from succinyl-CoA (ligase route): step 1/1. In terms of biological role, succinyl-CoA synthetase functions in the citric acid cycle (TCA), coupling the hydrolysis of succinyl-CoA to the synthesis of either ATP or GTP and thus represents the only step of substrate-level phosphorylation in the TCA. The beta subunit provides nucleotide specificity of the enzyme and binds the substrate succinate, while the binding sites for coenzyme A and phosphate are found in the alpha subunit. This chain is Succinate--CoA ligase [ADP-forming] subunit beta, found in Chlamydia felis (strain Fe/C-56) (Chlamydophila felis).